The chain runs to 333 residues: Glycerol-3-phosphate dehydrogenase [NAD(P)+] (333 aa).

5 residues coordinate NADPH: Ser-10, Trp-11, His-31, Arg-32, and Lys-105. Residues Lys-105, Gly-136, and Ser-138 each coordinate sn-glycerol 3-phosphate. NADPH is bound at residue Ala-140. Lys-191, Asp-244, Ser-254, Arg-255, and Asn-256 together coordinate sn-glycerol 3-phosphate. Lys-191 acts as the Proton acceptor in catalysis. Arg-255 lines the NADPH pocket. The NADPH site is built by Val-279 and Glu-281.

This sequence belongs to the NAD-dependent glycerol-3-phosphate dehydrogenase family.

It localises to the cytoplasm. The enzyme catalyses sn-glycerol 3-phosphate + NAD(+) = dihydroxyacetone phosphate + NADH + H(+). The catalysed reaction is sn-glycerol 3-phosphate + NADP(+) = dihydroxyacetone phosphate + NADPH + H(+). Its pathway is membrane lipid metabolism; glycerophospholipid metabolism. In terms of biological role, catalyzes the reduction of the glycolytic intermediate dihydroxyacetone phosphate (DHAP) to sn-glycerol 3-phosphate (G3P), the key precursor for phospholipid synthesis. In Chlorobium phaeobacteroides (strain DSM 266 / SMG 266 / 2430), this protein is Glycerol-3-phosphate dehydrogenase [NAD(P)+].